A 61-amino-acid chain; its full sequence is uncharacterized protein (61 aa).

This is an uncharacterized protein from Autographa californica nuclear polyhedrosis virus (AcMNPV).